A 105-amino-acid chain; its full sequence is UPF0235 protein RrIowa_1526 (105 aa).

The protein belongs to the UPF0235 family.

The polypeptide is UPF0235 protein RrIowa_1526 (Rickettsia rickettsii (strain Iowa)).